We begin with the raw amino-acid sequence, 402 residues long: Queuine tRNA-ribosyltransferase-like protein (402 aa).

It belongs to the queuine tRNA-ribosyltransferase family.

The protein is Queuine tRNA-ribosyltransferase-like protein of Theileria annulata.